A 360-amino-acid chain; its full sequence is NAD(P)H-quinone oxidoreductase subunit 1, chloroplastic (360 aa).

The next 9 membrane-spanning stretches (helical) occupy residues isoleucine 27–isoleucine 47, phenylalanine 98–phenylalanine 118, isoleucine 129–glycine 149, alanine 165–leucine 185, phenylalanine 203–leucine 223, tyrosine 248–serine 268, leucine 269–leucine 289, isoleucine 297–isoleucine 317, and phenylalanine 340–leucine 360.

It belongs to the complex I subunit 1 family. In terms of assembly, NDH is composed of at least 16 different subunits, 5 of which are encoded in the nucleus.

The protein localises to the plastid. It localises to the chloroplast thylakoid membrane. The catalysed reaction is a plastoquinone + NADH + (n+1) H(+)(in) = a plastoquinol + NAD(+) + n H(+)(out). It carries out the reaction a plastoquinone + NADPH + (n+1) H(+)(in) = a plastoquinol + NADP(+) + n H(+)(out). Functionally, NDH shuttles electrons from NAD(P)H:plastoquinone, via FMN and iron-sulfur (Fe-S) centers, to quinones in the photosynthetic chain and possibly in a chloroplast respiratory chain. The immediate electron acceptor for the enzyme in this species is believed to be plastoquinone. Couples the redox reaction to proton translocation, and thus conserves the redox energy in a proton gradient. The sequence is that of NAD(P)H-quinone oxidoreductase subunit 1, chloroplastic from Barbarea verna (Land cress).